The sequence spans 490 residues: Myocilin (490 aa).

A signal peptide spans 1–18 (MPATQLLLLACLVWGLGA). Asn-43 carries N-linked (GlcNAc...) asparagine glycosylation. A coiled-coil region spans residues 52 to 169 (QAMSAIQDLQ…SQEVARLRRG (118 aa)). The span at 146–157 (REENEDLARRLD) shows a compositional bias: basic and acidic residues. The tract at residues 146 to 188 (REENEDLARRLDSSSQEVARLRRGQCPQARGTPQDVPSGSREV) is disordered. The Olfactomedin-like domain maps to 230–489 (GCGELVWVGE…MVTYDLRLSE (260 aa)). A disulfide bridge connects residues Cys-231 and Cys-419. Ca(2+) contacts are provided by Asp-366, Asn-414, Ala-415, Val-463, and Asp-464. Residues 488–490 (SEM) carry the Microbody targeting signal motif.

In terms of assembly, homodimer (via N-terminus). Can also form higher oligomers. Interacts with OLFM3, FN1, NRCAM, GLDN and NFASC. Interacts (via N-terminus) with MYL2. Interacts with SFRP1, FRZB, FZD7, FZD10, FZD1 and WIF1; regulates Wnt signaling. Interacts with SNTA1; regulates muscle hypertrophy. Interacts with ERBB2 and ERBB3; activates ERBB2-ERBB3 signaling pathway. Interacts with SNCG; affects its secretion and its aggregation. In terms of processing, palmitoylated. Undergoes a calcium-dependent proteolytic cleavage at Arg-212 by CAPN2 in the endoplasmic reticulum. The result is the production of two fragments, one of 35 kDa containing the C-terminal olfactomedin-like domain, and another of 20 kDa containing the N-terminal leucine zipper-like domain. Post-translationally, glycosylated. As to expression, expressed in optic nerve head, ciliary body and retina.

It localises to the secreted. The protein resides in the golgi apparatus. Its subcellular location is the cytoplasmic vesicle. It is found in the extracellular space. The protein localises to the extracellular matrix. It localises to the extracellular exosome. The protein resides in the mitochondrion. Its subcellular location is the mitochondrion intermembrane space. It is found in the mitochondrion inner membrane. The protein localises to the mitochondrion outer membrane. It localises to the rough endoplasmic reticulum. The protein resides in the cell projection. Its subcellular location is the cilium. It is found in the endoplasmic reticulum. Secreted glycoprotein regulating the activation of different signaling pathways in adjacent cells to control different processes including cell adhesion, cell-matrix adhesion, cytoskeleton organization and cell migration. Promotes substrate adhesion, spreading and formation of focal contacts. Negatively regulates cell-matrix adhesion and stress fiber assembly through Rho protein signal transduction. Modulates the organization of actin cytoskeleton by stimulating the formation of stress fibers through interactions with components of Wnt signaling pathways. Promotes cell migration through activation of PTK2 and the downstream phosphatidylinositol 3-kinase signaling. Plays a role in bone formation and promotes osteoblast differentiation in a dose-dependent manner through mitogen-activated protein kinase signaling. Mediates myelination in the peripheral nervous system through ERBB2/ERBB3 signaling. Plays a role as a regulator of muscle hypertrophy through the components of dystrophin-associated protein complex. Involved in positive regulation of mitochondrial depolarization. Plays a role in neurite outgrowth. May participate in the obstruction of fluid outflow in the trabecular meshwork. In Felis catus (Cat), this protein is Myocilin (MYOC).